The chain runs to 297 residues: Superoxide dismutase 1 copper chaperone (297 aa).

A Cu cation-binding site is contributed by C11. Residues 222–263 (GSSCCSKKDSSPSEKPSCCSQEKKSCCSSKKPSCCSQEKKGC) are disordered. The span at 234-257 (SEKPSCCSQEKKSCCSSKKPSCCS) shows a compositional bias: low complexity.

The protein belongs to the CCS1 family.

The protein localises to the cytoplasm. In terms of biological role, copper chaperone for superoxide dismutase 1 (sod1). Binds copper ions and delivers them specifically to sod1. Also has a role in cell protection against copper ion toxicity during conditions of copper excess. The C-terminal region is thought to act specifically in this sequestration role. This Schizosaccharomyces pombe (strain 972 / ATCC 24843) (Fission yeast) protein is Superoxide dismutase 1 copper chaperone (ccs1).